A 475-amino-acid chain; its full sequence is Aspartyl/glutamyl-tRNA(Asn/Gln) amidotransferase subunit B (475 aa).

Belongs to the GatB/GatE family. GatB subfamily. In terms of assembly, heterotrimer of A, B and C subunits.

The catalysed reaction is L-glutamyl-tRNA(Gln) + L-glutamine + ATP + H2O = L-glutaminyl-tRNA(Gln) + L-glutamate + ADP + phosphate + H(+). The enzyme catalyses L-aspartyl-tRNA(Asn) + L-glutamine + ATP + H2O = L-asparaginyl-tRNA(Asn) + L-glutamate + ADP + phosphate + 2 H(+). Allows the formation of correctly charged Asn-tRNA(Asn) or Gln-tRNA(Gln) through the transamidation of misacylated Asp-tRNA(Asn) or Glu-tRNA(Gln) in organisms which lack either or both of asparaginyl-tRNA or glutaminyl-tRNA synthetases. The reaction takes place in the presence of glutamine and ATP through an activated phospho-Asp-tRNA(Asn) or phospho-Glu-tRNA(Gln). This is Aspartyl/glutamyl-tRNA(Asn/Gln) amidotransferase subunit B from Bacillus anthracis (strain A0248).